A 99-amino-acid polypeptide reads, in one-letter code: MPAVEKIGDNLRLRIFLQPKASKDHLIGLYDNALKISITAPPIDGQANAHLLKFLSKTFKVAKSQIILEKGELSRHKQILIPHPKSIPPVVANLLIETT.

It belongs to the UPF0235 family.

In Histophilus somni (strain 129Pt) (Haemophilus somnus), this protein is UPF0235 protein HS_1657.